Consider the following 499-residue polypeptide: Apolipoprotein N-acyltransferase (499 aa).

The next 6 membrane-spanning stretches (helical) occupy residues 9–29, 50–70, 77–97, 114–134, 148–168, and 183–203; these read LLLG…PALL, LGYI…SIGV, FWWA…FFVS, FIFC…FTGL, ILIQ…VIYI, and LKVL…YGSV. Residues 220 to 464 form the CN hydrolase domain; sequence VQPSIPQTEK…DGLIPKKLDS (245 aa). The active-site Proton acceptor is Glu-259. Lys-322 is a catalytic residue. The active-site Nucleophile is Cys-372. The chain crosses the membrane as a helical span at residues 466-486; sequence TIFSKFGNITILLIVFFIFLV.

Belongs to the CN hydrolase family. Apolipoprotein N-acyltransferase subfamily.

The protein localises to the cell inner membrane. The catalysed reaction is N-terminal S-1,2-diacyl-sn-glyceryl-L-cysteinyl-[lipoprotein] + a glycerophospholipid = N-acyl-S-1,2-diacyl-sn-glyceryl-L-cysteinyl-[lipoprotein] + a 2-acyl-sn-glycero-3-phospholipid + H(+). It participates in protein modification; lipoprotein biosynthesis (N-acyl transfer). Catalyzes the phospholipid dependent N-acylation of the N-terminal cysteine of apolipoprotein, the last step in lipoprotein maturation. The chain is Apolipoprotein N-acyltransferase from Rickettsia bellii (strain RML369-C).